The primary structure comprises 343 residues: MQLNERKLKILQAIIQDYIYTAEPVGSRSLSKKYDLQVSPATIRNEMADLEDMGYLIQPYTSAGRIPSDKGYRLYVDHLLQLEKNMVIQRDQIRSDLLNRFGEIEQLLQYSSKILSQLTNYTTIALAPQIKEVRLKHIQLIPMDEHHLLGIIITDTGLIKKTVLQVPEGLDAEAISKISEVINGRLQGVAIKGIPGEFTEEFTHELEQLSHGFDSVIPKMFQTLEELDKIELFLHGTTNIFNFPEFNDIFKAKSFLSMLEEKELISQLILSSSHKGMNATIGSENIYKEAKEYSLVTATYKIDEDVIGFVSIIGPTRMDYSNVMSTMGQVNKYINEVLKGKYK.

The protein belongs to the HrcA family.

Functionally, negative regulator of class I heat shock genes (grpE-dnaK-dnaJ and groELS operons). Prevents heat-shock induction of these operons. The polypeptide is Heat-inducible transcription repressor HrcA (Alkaliphilus metalliredigens (strain QYMF)).